The following is a 628-amino-acid chain: DNA mismatch repair protein MutL (628 aa).

The tract at residues 334–367 (SDFAQPSADNMPKPESPGAPAAHGRKDDAPAAHA) is disordered. Residues 357–367 (GRKDDAPAAHA) show a composition bias toward basic and acidic residues.

Belongs to the DNA mismatch repair MutL/HexB family.

In terms of biological role, this protein is involved in the repair of mismatches in DNA. It is required for dam-dependent methyl-directed DNA mismatch repair. May act as a 'molecular matchmaker', a protein that promotes the formation of a stable complex between two or more DNA-binding proteins in an ATP-dependent manner without itself being part of a final effector complex. The polypeptide is DNA mismatch repair protein MutL (Opitutus terrae (strain DSM 11246 / JCM 15787 / PB90-1)).